Here is a 46-residue protein sequence, read N- to C-terminus: Esculentin-1a/b (46 aa).

A disulfide bridge connects residues C40 and C46.

This sequence belongs to the frog skin active peptide (FSAP) family. Esculentin subfamily. Expressed by the skin glands.

The protein resides in the secreted. Its function is as follows. Antimicrobial peptide. Stimulates insulin secretion by BRIN-BD11 cells in vitro. Shows hemolytic activity. This is Esculentin-1a/b from Pelophylax ridibundus (Marsh frog).